Consider the following 1035-residue polypeptide: Potassium-transporting ATPase alpha chain 1 (1035 aa).

Positions 1–41 (MGKAENYELYSVELGPGPGGDMAAKMSKKKKAGGGGGKRKE) are disordered. The Cytoplasmic portion of the chain corresponds to 1–98 (MGKAENYELY…NALRPPRGTP (98 aa)). 2 positions are modified to phosphotyrosine: Tyr7 and Tyr10. Residues 26 to 40 (MSKKKKAGGGGGKRK) are compositionally biased toward basic residues. Ser27 is modified (phosphoserine). Residues 99 to 119 (EYVKFARQLAGGLQCLMWVAA) traverse the membrane as a helical segment. Residues 120-142 (AICLIAFAIQASEGDLTTDDNLY) are Lumenal-facing. Residues 143–163 (LAIALIAVVVVTGCFGYYQEF) form a helical membrane-spanning segment. The Cytoplasmic portion of the chain corresponds to 164–299 (KSTNIIASFK…NEKTPIAIEI (136 aa)). A helical transmembrane segment spans residues 300 to 319 (EHFVDIIAGLAILFGATFFI). Residues 320 to 331 (VAMCIGYTFLRA) are Lumenal-facing. The chain crosses the membrane as a helical span at residues 332-349 (MVFFMAIVVAYVPEGLLA). K(+)-binding residues include Val340, Ala341, Val343, and Glu345. Over 350–783 (TVTVCLSLTA…EQGRLIFDNL (434 aa)) the chain is Cytoplasmic. Catalysis depends on Asp387, which acts as the 4-aspartylphosphate intermediate. 2 residues coordinate Mg(2+): Asp387 and Thr389. A phosphoserine mark is found at Ser463 and Ser601. Positions 728 and 732 each coordinate Mg(2+). The helical transmembrane segment at 784–803 (KKSIAYTLTKNIPELTPYLI) threads the bilayer. Residue Glu797 participates in K(+) binding. Residues 804–813 (YITVSVPLPL) lie on the Lumenal side of the membrane. Residues 814–834 (GCITILFIELCTDIFPSVSLA) form a helical membrane-spanning segment. Glu822 contributes to the K(+) binding site. The Cytoplasmic portion of the chain corresponds to 835 to 854 (YEKAESDIMHLRPRNPKRDR). At Ser840 the chain carries Phosphoserine. The chain crosses the membrane as a helical span at residues 855-877 (LVNEPLAAYSYFQIGAIQSFAGF). The Lumenal portion of the chain corresponds to 878 to 929 (TDYFTAMAQEGWFPLLCVGLRAQWEDHHLQDLQDSYGQEWTFGQRLYQQYTC). A helical membrane pass occupies residues 930 to 949 (YTVFFISIEVCQIADVLIRK). At 950–963 (TRRLSAFQQGFFRN) the chain is on the cytoplasmic side. Ser954 is modified (phosphoserine; by PKA). The chain crosses the membrane as a helical span at residues 964 to 982 (KILVIAIVFQVCIGCFLCY). Residues 983–997 (CPGMPNIFNFMPIRF) are Lumenal-facing. Residues 998–1018 (QWWLVPLPYGILIFVYDEIRK) traverse the membrane as a helical segment. Topologically, residues 1019–1035 (LGVRCCPGSWWDQELYY) are cytoplasmic.

It belongs to the cation transport ATPase (P-type) (TC 3.A.3) family. Type IIC subfamily. The gastric H(+)/K(+) ATPase pump is composed of the catalytic alpha subunit ATP4A and the regulatory beta subunit ATP4B. Interacts (via the P-domain) with ATP4B (via N-terminus); this interaction stabilizes the lumenal-open E2 conformation state and prevents the reverse reaction of the transport cycle. In terms of tissue distribution, expressed in gastric parietal cells (at protein level).

Its subcellular location is the apical cell membrane. It carries out the reaction K(+)(out) + ATP + H2O + H(+)(in) = K(+)(in) + ADP + phosphate + 2 H(+)(out). The catalytic subunit of the gastric H(+)/K(+) ATPase pump which transports H(+) ions in exchange for K(+) ions across the apical membrane of parietal cells. Uses ATP as an energy source to pump H(+) ions to the gastric lumen while transporting K(+) ion from the lumen into the cell. Remarkably generates a million-fold proton gradient across the gastric parietal cell membrane, acidifying the gastric juice down to pH 1. Within a transport cycle, the transfer of a H(+) ion across the membrane is coupled to ATP hydrolysis and is associated with a transient phosphorylation that shifts the pump conformation from inward-facing (E1) to outward-facing state (E2). The release of the H(+) ion in the stomach lumen is followed by binding of K(+) ion converting the pump conformation back to the E1 state. The chain is Potassium-transporting ATPase alpha chain 1 from Homo sapiens (Human).